A 476-amino-acid polypeptide reads, in one-letter code: 3-isopropylmalate dehydratase large subunit (476 aa).

[4Fe-4S] cluster contacts are provided by Cys357, Cys417, and Cys420.

The protein belongs to the aconitase/IPM isomerase family. LeuC type 1 subfamily. In terms of assembly, heterodimer of LeuC and LeuD. [4Fe-4S] cluster serves as cofactor.

The catalysed reaction is (2R,3S)-3-isopropylmalate = (2S)-2-isopropylmalate. It functions in the pathway amino-acid biosynthesis; L-leucine biosynthesis; L-leucine from 3-methyl-2-oxobutanoate: step 2/4. Functionally, catalyzes the isomerization between 2-isopropylmalate and 3-isopropylmalate, via the formation of 2-isopropylmaleate. The protein is 3-isopropylmalate dehydratase large subunit of Mycobacterium leprae (strain TN).